Reading from the N-terminus, the 490-residue chain is Protein dead ringer homolog (490 aa).

The span at 1–33 (MVEDQRRQLMEEEDEERRLILEEQRRRMMRADR) shows a compositional bias: basic and acidic residues. Disordered stretches follow at residues 1–77 (MVED…AHID) and 106–135 (ITQS…HGGS). A compositionally biased stretch (acidic residues) spans 34–50 (DEEEEEEEEEEEEEREE). The span at 51 to 76 (DDGRRSEDEMREDEPPGRRETSHAHI) shows a compositional bias: basic and acidic residues. Over residues 106–117 (ITQSPPLTNGSN) the composition is skewed to polar residues. The region spanning 202 to 294 (DSKRKEFLDD…YLYPYECEKK (93 aa)) is the ARID domain. The tract at residues 298-369 (SPSELQSAID…PPRLSPSTSP (72 aa)) is disordered. Positions 316-325 (PSYHSPHMHP) are enriched in basic residues. The 91-residue stretch at 389 to 479 (AAMLAELAER…GVLYPRGGTR (91 aa)) folds into the REKLES domain.

Its subcellular location is the nucleus. Its function is as follows. Transcription factor involved in skeletogenesis and oral ectoderm patterning. The sequence is that of Protein dead ringer homolog (dri) from Strongylocentrotus purpuratus (Purple sea urchin).